The chain runs to 208 residues: N-(5'-phosphoribosyl)anthranilate isomerase (208 aa).

Belongs to the TrpF family.

The catalysed reaction is N-(5-phospho-beta-D-ribosyl)anthranilate = 1-(2-carboxyphenylamino)-1-deoxy-D-ribulose 5-phosphate. Its pathway is amino-acid biosynthesis; L-tryptophan biosynthesis; L-tryptophan from chorismate: step 3/5. This Lactiplantibacillus plantarum (strain ATCC BAA-793 / NCIMB 8826 / WCFS1) (Lactobacillus plantarum) protein is N-(5'-phosphoribosyl)anthranilate isomerase.